A 1203-amino-acid polypeptide reads, in one-letter code: Transmembrane channel-like protein 2 (1203 aa).

Disordered stretches follow at residues 1–39 and 64–90; these read MPKS…IDSR and PHTR…EASK. A compositionally biased stretch (acidic residues) spans 73–86; that stretch reads FDDDDDEFDEEDDK. Residues 191-213 form a helical membrane-spanning segment; it reads VLGVNITITFIMCMFVVIPEWLA. A glycan (N-linked (GlcNAc...) asparagine) is linked at Asn225. Helical transmembrane passes span 276–298, 369–391, 406–428, 441–463, 665–687, and 714–736; these read YRVP…FIIL, FVAR…WAIM, ATAI…LGKI, LGRV…MLQL, MIWL…LIIL, and FFFA…VIAS. N-linked (GlcNAc...) asparagine glycosylation is present at Asn748. Residues 780–802 form a helical membrane-spanning segment; sequence IIIPVLVLLSLVIYFLIAMVTGL. 4 disordered regions span residues 826–908, 927–1039, 1059–1087, and 1112–1203; these read ELAG…SLPP, KYGR…IEKQ, ATVE…HEPL, and NDET…SDND. A compositionally biased stretch (polar residues) spans 865–874; the sequence is NRSTAKSVSG. Over residues 898-908 the composition is skewed to low complexity; it reads DSESTTSSLPP. The span at 927–945 shows a compositional bias: basic and acidic residues; sequence KYGRHDDIEMEEGGGRLRE. 2 stretches are compositionally biased toward low complexity: residues 973-997 and 1022-1035; these read QSFD…PSNS and SASS…PSSS. A compositionally biased stretch (polar residues) spans 1061–1076; sequence VENSSQDPTRPPSTDD. 2 stretches are compositionally biased toward basic and acidic residues: residues 1133 to 1147 and 1172 to 1203; these read SPRE…KDQQ and PPSE…SDND.

This sequence belongs to the TMC family.

It localises to the membrane. Probable ion channel. The protein is Transmembrane channel-like protein 2 (tmc-2) of Caenorhabditis elegans.